The chain runs to 530 residues: 4,4'-diapolycopene aldehyde oxidase (530 aa).

Active-site residues include Glu234 and Cys268.

The protein belongs to the aldehyde dehydrogenase family.

It carries out the reaction all-trans-4,4'-diapolycopen-4-al + A + H2O = all-trans-4,4'-diapolycopen-4-oate + AH2 + H(+). It catalyses the reaction all-trans-4,4'-diapolycopene-4,4'-dial + 2 A + 2 H2O = all-trans-4,4'-diapolycopene-4,4'-dioate + 2 AH2 + 2 H(+). It participates in carotenoid biosynthesis. In terms of biological role, involved in the biosynthesis of C30 carotenoids. Catalyzes the oxidation of 4,4'-diapolycopene-4,4'-dial to yield 4,4'-diapolycopene-4,4'-dioic acid. Also able to catalyze the oxidation of 4,4'-diapolycopen-4-al to yield 4,4'-diapolycopen-4-oic acid. This Methylomonas sp protein is 4,4'-diapolycopene aldehyde oxidase.